Here is a 234-residue protein sequence, read N- to C-terminus: 2-C-methyl-D-erythritol 4-phosphate cytidylyltransferase (234 aa).

It belongs to the IspD/TarI cytidylyltransferase family. IspD subfamily.

The enzyme catalyses 2-C-methyl-D-erythritol 4-phosphate + CTP + H(+) = 4-CDP-2-C-methyl-D-erythritol + diphosphate. It functions in the pathway isoprenoid biosynthesis; isopentenyl diphosphate biosynthesis via DXP pathway; isopentenyl diphosphate from 1-deoxy-D-xylulose 5-phosphate: step 2/6. Catalyzes the formation of 4-diphosphocytidyl-2-C-methyl-D-erythritol from CTP and 2-C-methyl-D-erythritol 4-phosphate (MEP). In Pseudomonas paraeruginosa (strain DSM 24068 / PA7) (Pseudomonas aeruginosa (strain PA7)), this protein is 2-C-methyl-D-erythritol 4-phosphate cytidylyltransferase.